Consider the following 422-residue polypeptide: Histidine--tRNA ligase (422 aa).

This sequence belongs to the class-II aminoacyl-tRNA synthetase family. In terms of assembly, homodimer.

It localises to the cytoplasm. It catalyses the reaction tRNA(His) + L-histidine + ATP = L-histidyl-tRNA(His) + AMP + diphosphate + H(+). The sequence is that of Histidine--tRNA ligase from Mycolicibacterium vanbaalenii (strain DSM 7251 / JCM 13017 / BCRC 16820 / KCTC 9966 / NRRL B-24157 / PYR-1) (Mycobacterium vanbaalenii).